A 569-amino-acid chain; its full sequence is Arginine--tRNA ligase (569 aa).

The 'HIGH' region signature appears at 123–133; the sequence is PNIAKRMHIGH.

The protein belongs to the class-I aminoacyl-tRNA synthetase family. As to quaternary structure, monomer.

It localises to the cytoplasm. The catalysed reaction is tRNA(Arg) + L-arginine + ATP = L-arginyl-tRNA(Arg) + AMP + diphosphate. The chain is Arginine--tRNA ligase from Fusobacterium nucleatum subsp. nucleatum (strain ATCC 25586 / DSM 15643 / BCRC 10681 / CIP 101130 / JCM 8532 / KCTC 2640 / LMG 13131 / VPI 4355).